Here is a 64-residue protein sequence, read N- to C-terminus: Large ribosomal subunit protein uL30 (64 aa).

This sequence belongs to the universal ribosomal protein uL30 family. Part of the 50S ribosomal subunit.

This chain is Large ribosomal subunit protein uL30, found in Rhodopseudomonas palustris (strain HaA2).